We begin with the raw amino-acid sequence, 70 residues long: Melittin (70 aa).

An N-terminal signal peptide occupies residues 1–21; the sequence is MKFLVNVALVFMVVYISFIYA. Residues 22-43 constitute a propeptide, removed by a dipeptidylpeptidase; sequence APEPEPAPEAEAEADAEADPEA. Gly-44 is modified (N-formylglycine; partial). Position 69 is a glutamine amide (Gln-69).

This sequence belongs to the melittin family. As to quaternary structure, monomer (in solution and for integration into membranes), homotetramer (in solution and potentially as a toroidal pore in membranes), and potenially homomultimer (as a toroidal pore in membranes). Expressed by the venom gland.

The protein localises to the secreted. It is found in the target cell membrane. Main toxin of bee venom with strong hemolytic activity and antimicrobial activity. It has enhancing effects on bee venom phospholipase A2 activity. This amphipathic toxin binds to negatively charged membrane surface and forms pore by inserting into lipid bilayers inducing the leakage of ions and molecules and the enhancement of permeability that ultimately leads to cell lysis. It acts as a voltage-gated pore with higher selectivity for anions over cations. The ion conductance has been shown to be voltage-dependent. Self-association of melittin in membranes is promoted by high ionic strength, but not by the presence of negatively charged lipids. In vivo, intradermal injection into healthy human volunteers produce sharp pain sensation and an inflammatory response. It produces pain by activating primary nociceptor cells directly and indirectly due to its ability to activate plasma membrane phospholipase A2 and its pore-forming activity. This Polistes hebraeus (Paper wasp) protein is Melittin (MELT).